Consider the following 103-residue polypeptide: UPF0091 protein PH0944 (103 aa).

The protein belongs to the UPF0091 family.

In Pyrococcus horikoshii (strain ATCC 700860 / DSM 12428 / JCM 9974 / NBRC 100139 / OT-3), this protein is UPF0091 protein PH0944.